Here is a 557-residue protein sequence, read N- to C-terminus: Urocanate hydratase (557 aa).

Residues 53–54 (GG), Gln-131, 177–179 (GMG), Glu-197, Arg-202, 243–244 (NA), 264–268 (QTSAH), 274–275 (YL), and Tyr-323 each bind NAD(+). The active site involves Cys-411. Position 493 (Gly-493) interacts with NAD(+).

Belongs to the urocanase family. NAD(+) is required as a cofactor.

The protein localises to the cytoplasm. It carries out the reaction 4-imidazolone-5-propanoate = trans-urocanate + H2O. The protein operates within amino-acid degradation; L-histidine degradation into L-glutamate; N-formimidoyl-L-glutamate from L-histidine: step 2/3. Functionally, catalyzes the conversion of urocanate to 4-imidazolone-5-propionate. The polypeptide is Urocanate hydratase (Pseudomonas entomophila (strain L48)).